The chain runs to 425 residues: Protein-glutamate methylesterase/protein-glutamine glutaminase (425 aa).

One can recognise a Response regulatory domain in the interval 22–140 (RVMVVDDSVV…EVAAADIFRH (119 aa)). The residue at position 73 (D73) is a 4-aspartylphosphate. Disordered stretches follow at residues 150 to 174 (AAKR…SNAS) and 203 to 223 (VQRE…RPQP). The region spanning 221–417 (PQPTLRSFSA…PLQQIAPKLV (197 aa)) is the CheB-type methylesterase domain. Catalysis depends on residues S241, H269, and D365.

It belongs to the CheB family. Post-translationally, phosphorylated by CheA. Phosphorylation of the N-terminal regulatory domain activates the methylesterase activity.

The protein resides in the cytoplasm. It catalyses the reaction [protein]-L-glutamate 5-O-methyl ester + H2O = L-glutamyl-[protein] + methanol + H(+). The catalysed reaction is L-glutaminyl-[protein] + H2O = L-glutamyl-[protein] + NH4(+). Functionally, involved in chemotaxis. Part of a chemotaxis signal transduction system that modulates chemotaxis in response to various stimuli. Catalyzes the demethylation of specific methylglutamate residues introduced into the chemoreceptors (methyl-accepting chemotaxis proteins or MCP) by CheR. Also mediates the irreversible deamidation of specific glutamine residues to glutamic acid. The protein is Protein-glutamate methylesterase/protein-glutamine glutaminase of Nitrobacter winogradskyi (strain ATCC 25391 / DSM 10237 / CIP 104748 / NCIMB 11846 / Nb-255).